A 422-amino-acid chain; its full sequence is Proline-rich protein 22 (422 aa).

3 disordered regions span residues 1–35, 306–325, and 363–422; these read MQHP…PAPT, LCEV…SADD, and EEQP…ATPH. A compositionally biased stretch (basic residues) spans 383-400; the sequence is GKRKASTAKKGKPGRKAR. A compositionally biased stretch (basic and acidic residues) spans 413-422; the sequence is PREDLGATPH.

The sequence is that of Proline-rich protein 22 (PRR22) from Homo sapiens (Human).